We begin with the raw amino-acid sequence, 356 residues long: UDP-N-acetylglucosamine--N-acetylmuramyl-(pentapeptide) pyrophosphoryl-undecaprenol N-acetylglucosamine transferase (356 aa).

UDP-N-acetyl-alpha-D-glucosamine contacts are provided by residues 12-14, Asn124, Arg163, Ser188, Ile242, 261-266, and Gln287; these read TGG and ALTVSE.

Belongs to the glycosyltransferase 28 family. MurG subfamily.

The protein localises to the cell inner membrane. The enzyme catalyses di-trans,octa-cis-undecaprenyl diphospho-N-acetyl-alpha-D-muramoyl-L-alanyl-D-glutamyl-meso-2,6-diaminopimeloyl-D-alanyl-D-alanine + UDP-N-acetyl-alpha-D-glucosamine = di-trans,octa-cis-undecaprenyl diphospho-[N-acetyl-alpha-D-glucosaminyl-(1-&gt;4)]-N-acetyl-alpha-D-muramoyl-L-alanyl-D-glutamyl-meso-2,6-diaminopimeloyl-D-alanyl-D-alanine + UDP + H(+). It functions in the pathway cell wall biogenesis; peptidoglycan biosynthesis. Cell wall formation. Catalyzes the transfer of a GlcNAc subunit on undecaprenyl-pyrophosphoryl-MurNAc-pentapeptide (lipid intermediate I) to form undecaprenyl-pyrophosphoryl-MurNAc-(pentapeptide)GlcNAc (lipid intermediate II). In Azotobacter vinelandii (strain DJ / ATCC BAA-1303), this protein is UDP-N-acetylglucosamine--N-acetylmuramyl-(pentapeptide) pyrophosphoryl-undecaprenol N-acetylglucosamine transferase.